The following is a 200-amino-acid chain: 3-isopropylmalate dehydratase small subunit (200 aa).

Belongs to the LeuD family. LeuD type 1 subfamily. As to quaternary structure, heterodimer of LeuC and LeuD.

It carries out the reaction (2R,3S)-3-isopropylmalate = (2S)-2-isopropylmalate. Its pathway is amino-acid biosynthesis; L-leucine biosynthesis; L-leucine from 3-methyl-2-oxobutanoate: step 2/4. Catalyzes the isomerization between 2-isopropylmalate and 3-isopropylmalate, via the formation of 2-isopropylmaleate. This Haemophilus influenzae (strain 86-028NP) protein is 3-isopropylmalate dehydratase small subunit.